The chain runs to 340 residues: 4-dimethylallyltryptophan N-methyltransferase ifgB (340 aa).

The protein belongs to the methyltransferase superfamily. As to quaternary structure, homodimer.

The enzyme catalyses 4-(3-methylbut-2-enyl)-L-tryptophan + S-adenosyl-L-methionine = 4-(3-methylbut-2-enyl)-L-abrine + S-adenosyl-L-homocysteine + H(+). It functions in the pathway alkaloid biosynthesis; ergot alkaloid biosynthesis. 4-dimethylallyltryptophan N-methyltransferase; part of the gene cluster that mediates the biosynthesis of isofumigaclavines, fungal ergot alkaloids. The tryptophan dimethylallyltransferase ifgA catalyzes the first step of ergot alkaloid biosynthesis by condensing dimethylallyl diphosphate (DMAP) and tryptophan to form 4-dimethylallyl-L-tryptophan. The second step is catalyzed by the methyltransferase ifgB that methylates 4-dimethylallyl-L-tryptophan in the presence of S-adenosyl-L-methionine, resulting in the formation of N-methyl-dimethylallyl-L-tryptophan. The catalase ifgD and the FAD-dependent oxidoreductase ifgC then transform N-methyl-dimethylallyl-L-tryptophan to chanoclavine-I which is further oxidized by ifgE in the presence of NAD(+), resulting in the formation of chanoclavine-I aldehyde. The chanoclavine-I aldehyde reductases ifgG and/or fgaOx3 reduce chanoclavine-I aldehyde to dihydrochanoclavine-I aldehyde that spontaneously dehydrates to form 6,8-dimethyl-6,7-didehydroergoline. The festuclavine dehydrogenases ifgF1 and/or ifgF2 then catalyze the reduction of 6,8-dimethyl-6,7-didehydroergoline to form festuclavine. Hydrolysis of festuclavine by a yet undetermined cytochrome P450 monooxygenase (called ifgH) then leads to the formation of isofumigaclavine B which is in turn acetylated by ifgI to isofumigaclavine A. Penicillium roqueforti has interestingly at least two sets of genes for the consumption of chanoclavine-I aldehyde on three different loci, the OYEs ifgG/fgaOx3 and the festuclavine synthase homologs ifgF1/ifgF2. The reason for the duplication of these genes is unclear, probably to ensure the conversion of chanoclavine-I aldehyde by differential gene expression under various environmental conditions. This chain is 4-dimethylallyltryptophan N-methyltransferase ifgB, found in Penicillium roqueforti (strain FM164).